Consider the following 645-residue polypeptide: Cyclic nucleotide-gated channel rod photoreceptor subunit alpha (645 aa).

Residues 1-121 (MKVGVIETHH…PAGNMYYNWL (121 aa)) are Cytoplasmic-facing. The disordered stretch occupies residues 53 to 100 (NNNSNKDEEKKKKKEKKSKSENKKDGERQKNKEKKEKHKNKDKKKGKE). Residues 70 to 86 (SKSENKKDGERQKNKEK) are compositionally biased toward basic and acidic residues. A compositionally biased stretch (basic residues) spans 87 to 96 (KEKHKNKDKK). The helical transmembrane segment at 122-143 (FCITMPVMYNWTMIIARACFDE) threads the bilayer. Residues 144–153 (LQNDYLAVWF) lie on the Extracellular side of the membrane. A helical membrane pass occupies residues 154–174 (IVDYVSDVIYIADMFVRTRTG). Topologically, residues 175–199 (YLEQGLLVKEEQKLKEKYKSSLQFK) are cytoplasmic. The helical transmembrane segment at 200–218 (LDFLSIIPTDLLYFKLGLN) threads the bilayer. Topologically, residues 219-223 (YPELR) are extracellular. Residues 224–242 (INRLLRVARMFEFFQRTET) form a helical membrane-spanning segment. Residues 243–249 (RTNYPNI) lie on the Cytoplasmic side of the membrane. The helical transmembrane segment at 250 to 273 (FRISNLVMYIVIIIHWNACVYYSI) threads the bilayer. Residues 274-296 (SKAIGFGADTWVYPNTSHPEFAR) are Extracellular-facing. Transmembrane regions (helical) follow at residues 297-331 (LTRKYVYSLYWSTLTLTTIGETPPPVRDSEYFFVV) and 332-356 (VDFLVGVLIFATIVGNVGSMISNMN). The Cytoplasmic segment spans residues 357-645 (AARAEFQAKI…TDKPGVTKTE (289 aa)). 3',5'-cyclic GMP is bound by residues 439–561 (LLVE…DGLL), glutamate 498, and arginine 513.

It belongs to the cyclic nucleotide-gated cation channel (TC 1.A.1.5) family.

The protein resides in the membrane. Its function is as follows. Visual signal transduction is mediated by a G-protein coupled cascade using cGMP as second messenger. This protein can be activated by cGMP which leads to an opening of the cation channel and thereby causing a depolarization of rod photoreceptors. This is Cyclic nucleotide-gated channel rod photoreceptor subunit alpha from Gallus gallus (Chicken).